A 246-amino-acid chain; its full sequence is MyoD family inhibitor (246 aa).

Disordered stretches follow at residues 1–76 (MYQV…LDST) and 91–151 (GNPL…SKST). Residues 14–26 (APYGAPSAAPGPA) show a composition bias toward low complexity. Residues 99 to 246 (LLPNDSGHPS…MECCGLCFSS (148 aa)) form the MDFI domain.

This sequence belongs to the MDFI family. Interacts (via C-terminus) with AXIN1 and LEF1. Interacts with CCNT2. Interacts (via C-terminus) with Piezo channel composed of PIEZO1 or PIEZO2; the interaction prolongs Piezo channel inactivation.

The protein resides in the nucleus. It localises to the cytoplasm. In terms of biological role, inhibits the transactivation activity of the Myod family of myogenic factors and represses myogenesis. Acts by associating with Myod family members and retaining them in the cytoplasm by masking their nuclear localization signals. Can also interfere with the DNA-binding activity of Myod family members. Plays an important role in trophoblast and chondrogenic differentiation. Regulates the transcriptional activity of TCF7L1/TCF3 by interacting directly with TCF7L1/TCF3 and preventing it from binding DNA. Binds to the axin complex, resulting in an increase in the level of free beta-catenin. Affects axin regulation of the WNT and JNK signaling pathways. Regulates the activity of mechanosensitive Piezo channel. The chain is MyoD family inhibitor (MDFI) from Homo sapiens (Human).